The sequence spans 209 residues: Protein-L-isoaspartate O-methyltransferase (209 aa).

The active site involves S59.

The protein belongs to the methyltransferase superfamily. L-isoaspartyl/D-aspartyl protein methyltransferase family. In terms of assembly, monomer.

The protein resides in the cytoplasm. It catalyses the reaction [protein]-L-isoaspartate + S-adenosyl-L-methionine = [protein]-L-isoaspartate alpha-methyl ester + S-adenosyl-L-homocysteine. In terms of biological role, catalyzes the methyl esterification of L-isoaspartyl residues in peptides and proteins that result from spontaneous decomposition of normal L-aspartyl and L-asparaginyl residues. It plays a role in the repair and/or degradation of damaged proteins. The protein is Protein-L-isoaspartate O-methyltransferase (pcm) of Helicobacter pylori (strain J99 / ATCC 700824) (Campylobacter pylori J99).